The following is a 321-amino-acid chain: tRNA(Ile)-lysidine synthase (321 aa).

21-26 (SYGSDS) provides a ligand contact to ATP.

The protein belongs to the tRNA(Ile)-lysidine synthase family.

It localises to the cytoplasm. It carries out the reaction cytidine(34) in tRNA(Ile2) + L-lysine + ATP = lysidine(34) in tRNA(Ile2) + AMP + diphosphate + H(+). In terms of biological role, ligates lysine onto the cytidine present at position 34 of the AUA codon-specific tRNA(Ile) that contains the anticodon CAU, in an ATP-dependent manner. Cytidine is converted to lysidine, thus changing the amino acid specificity of the tRNA from methionine to isoleucine. In Campylobacter jejuni (strain RM1221), this protein is tRNA(Ile)-lysidine synthase.